The primary structure comprises 151 residues: Regulatory protein RecX (151 aa).

The protein belongs to the RecX family.

It is found in the cytoplasm. Functionally, modulates RecA activity. In Actinobacillus pleuropneumoniae serotype 5b (strain L20), this protein is Regulatory protein RecX.